Here is a 450-residue protein sequence, read N- to C-terminus: Tubulin alpha-2 chain (450 aa).

Residues Gln11, Glu71, Gly144, Thr145, Thr179, Asn206, and Asn228 each coordinate GTP. Mg(2+) is bound at residue Glu71. The active site involves Glu254. Thr349 bears the Phosphothreonine mark. The segment at 430-450 (KDYEEVGAEGGDDEDDEGEEY) is disordered. The segment covering 431 to 450 (DYEEVGAEGGDDEDDEGEEY) has biased composition (acidic residues).

This sequence belongs to the tubulin family. As to quaternary structure, dimer of alpha and beta chains. A typical microtubule is a hollow water-filled tube with an outer diameter of 25 nm and an inner diameter of 15 nM. Alpha-beta heterodimers associate head-to-tail to form protofilaments running lengthwise along the microtubule wall with the beta-tubulin subunit facing the microtubule plus end conferring a structural polarity. Microtubules usually have 13 protofilaments but different protofilament numbers can be found in some organisms and specialized cells. The cofactor is Mg(2+). In terms of processing, undergoes a tyrosination/detyrosination cycle, the cyclic removal and re-addition of a C-terminal tyrosine residue by the enzymes tubulin tyrosine carboxypeptidase (TTCP) and tubulin tyrosine ligase (TTL), respectively. Post-translationally, acetylation of alpha chains at Lys-40 stabilizes microtubules and affects affinity and processivity of microtubule motors. This modification has a role in multiple cellular functions, ranging from cell motility, cell cycle progression or cell differentiation to intracellular trafficking and signaling.

Its subcellular location is the cytoplasm. The protein localises to the cytoskeleton. It carries out the reaction GTP + H2O = GDP + phosphate + H(+). Tubulin is the major constituent of microtubules, a cylinder consisting of laterally associated linear protofilaments composed of alpha- and beta-tubulin heterodimers. Microtubules grow by the addition of GTP-tubulin dimers to the microtubule end, where a stabilizing cap forms. Below the cap, tubulin dimers are in GDP-bound state, owing to GTPase activity of alpha-tubulin. The chain is Tubulin alpha-2 chain (TUBA2) from Arabidopsis thaliana (Mouse-ear cress).